A 260-amino-acid polypeptide reads, in one-letter code: Serine hydroxymethyltransferase (260 aa).

Position 60 is an N6-(pyridoxal phosphate)lysine (lysine 60).

Belongs to the SHMT family. As to quaternary structure, homodimer. Pyridoxal 5'-phosphate is required as a cofactor.

The protein resides in the cytoplasm. It carries out the reaction (6R)-5,10-methylene-5,6,7,8-tetrahydrofolate + glycine + H2O = (6S)-5,6,7,8-tetrahydrofolate + L-serine. It participates in one-carbon metabolism; tetrahydrofolate interconversion. The protein operates within amino-acid biosynthesis; glycine biosynthesis; glycine from L-serine: step 1/1. Its function is as follows. Catalyzes the reversible interconversion of serine and glycine with tetrahydrofolate (THF) serving as the one-carbon carrier. This reaction serves as the major source of one-carbon groups required for the biosynthesis of purines, thymidylate, methionine, and other important biomolecules. Also exhibits THF-independent aldolase activity toward beta-hydroxyamino acids, producing glycine and aldehydes, via a retro-aldol mechanism. The protein is Serine hydroxymethyltransferase of Corynebacterium sp. (strain P-1).